A 356-amino-acid polypeptide reads, in one-letter code: CMP-sialic acid transporter 2 (356 aa).

Positions 1–24 (MEYRRVKDQESYDVVSQKDIESPG) are enriched in basic and acidic residues. Positions 1–43 (MEYRRVKDQESYDVVSQKDIESPGERSLSSTSATSSLSTAGAS) are disordered. The Cytoplasmic segment spans residues 1–52 (MEYRRVKDQESYDVVSQKDIESPGERSLSSTSATSSLSTAGASKGNNSWKLK). Positions 27–43 (SLSSTSATSSLSTAGAS) are enriched in low complexity. Residues 53-73 (SIVTLALTLLTSSQAILIVWS) form a helical membrane-spanning segment. At 74 to 82 (KRAGKYEYS) the chain is on the lumenal side. The helical transmembrane segment at 83–103 (VTTANFSVEALKCLLSLIALY) threads the bilayer. At 104–125 (RTWNSQGVTEDNRLSTSFDEVS) the chain is on the cytoplasmic side. Residues 126 to 146 (VYPIPAILYMVKNLLQYYIFA) traverse the membrane as a helical segment. The Lumenal segment spans residues 147–149 (YVD). The chain crosses the membrane as a helical span at residues 150–172 (APAYQILKNLNIISTGVLYRIIL). At 173–175 (KKK) the chain is on the cytoplasmic side. A helical membrane pass occupies residues 176 to 196 (LSEIQWAAFILLCAGCTTAQL). Over 197–211 (NPSSDHVLQTPIQGW) the chain is Lumenal. A helical membrane pass occupies residues 212–232 (VMAIVMALLSGFAGVYTEAII). At 233–239 (KKRPSRN) the chain is on the cytoplasmic side. A helical transmembrane segment spans residues 240–260 (INVQNFWLYIFGMLFNLVAIC). Residues 261 to 277 (VQDFDAVMNKGFFHGYS) are Lumenal-facing. The helical transmembrane segment at 278–298 (FITVLMILNHALSGIAVSMVM) threads the bilayer. Residues 299-314 (KYADNIVKVYSTSVAM) lie on the Cytoplasmic side of the membrane. Residues 315-335 (LLTAVVSVFLFGFHLSLAFFL) form a helical membrane-spanning segment. Residues 336 to 356 (GSTVVSVSVYLHSVGKPQPQK) are Lumenal-facing.

The protein belongs to the nucleotide-sugar transporter family. CMP-Sialate:CMP antiporter (TC 2.A.7.12) subfamily.

Its subcellular location is the golgi apparatus membrane. In terms of biological role, sugar transporter involved in the transport of CMP-sialic acid from the cytoplasm into the Golgi. May transport important nucleotide sugars such as CMP-Kdo (2-keto-3-deoxy-D-manno-octulosonic acid) in physiological conditions. The chain is CMP-sialic acid transporter 2 from Oryza sativa subsp. indica (Rice).